A 174-amino-acid polypeptide reads, in one-letter code: Transcription factor bHLH36 (174 aa).

Positions methionine 1 to leucine 53 constitute a bHLH domain.

As to quaternary structure, homodimer. As to expression, expressed constitutively in roots, leaves, stems, and flowers.

The protein localises to the nucleus. In Arabidopsis thaliana (Mouse-ear cress), this protein is Transcription factor bHLH36 (BHLH36).